A 77-amino-acid polypeptide reads, in one-letter code: Large ribosomal subunit protein bL28 (77 aa).

This sequence belongs to the bacterial ribosomal protein bL28 family.

In Dechloromonas aromatica (strain RCB), this protein is Large ribosomal subunit protein bL28.